We begin with the raw amino-acid sequence, 414 residues long: Transmembrane protein 184A (414 aa).

Positions 1–32 (MTDTPGLLGTPLAWTPPARPAGPQMERAGNGS) are disordered. Helical transmembrane passes span 48–68 (VSGVFVWAALVLTGHQIYLHL), 83–103 (LLFIVPVYAFDSWLSLLLLGG), 120–140 (FVIYSFLSLCFQYLGGESAIM), 177–197 (LQFCIVKPIMALVTIVLQAFG), 211–231 (LYITLVYNASVSLALYALFLF), 248–268 (FLTIKAVIFLSFWQGLLLAIL), and 290–310 (VAAGYQNFIICIEMLFASIAL). Disordered stretches follow at residues 323 to 342 (TESSPAPSAPMQSISSGLKE) and 364 to 414 (YTQQ…AEEL). Residues 379–388 (SVPSPRTPTH) show a composition bias toward polar residues.

This sequence belongs to the TMEM184 family. As to expression, expressed in vascular cells (at protein level).

The protein resides in the cell membrane. It is found in the cytoplasm. It localises to the perinuclear region. Its subcellular location is the cytoplasmic vesicle membrane. The protein localises to the early endosome membrane. The protein resides in the endosome. It is found in the cytoplasmic vesicle. It localises to the secretory vesicle membrane. In terms of biological role, acts as a heparin receptor in vascular cells. May be involved in vesicle transport in exocrine cells and Sertoli cells. The polypeptide is Transmembrane protein 184A (TMEM184A) (Bos taurus (Bovine)).